A 307-amino-acid polypeptide reads, in one-letter code: Ribonuclease Z (307 aa).

Zn(2+) contacts are provided by His-63, His-65, Asp-67, His-68, His-141, Asp-212, and His-270. Asp-67 acts as the Proton acceptor in catalysis.

It belongs to the RNase Z family. As to quaternary structure, homodimer. The cofactor is Zn(2+).

The enzyme catalyses Endonucleolytic cleavage of RNA, removing extra 3' nucleotides from tRNA precursor, generating 3' termini of tRNAs. A 3'-hydroxy group is left at the tRNA terminus and a 5'-phosphoryl group is left at the trailer molecule.. In terms of biological role, zinc phosphodiesterase, which displays some tRNA 3'-processing endonuclease activity. Probably involved in tRNA maturation, by removing a 3'-trailer from precursor tRNA. The protein is Ribonuclease Z of Bacillus cereus (strain B4264).